The following is a 172-amino-acid chain: uncharacterized protein (172 aa).

The interval 22-64 (RSVSSSPAAKQPAPGTVAQSFPPGELALRDETGGRGRGTRGIR) is disordered.

This is an uncharacterized protein from Human cytomegalovirus (strain AD169) (HHV-5).